Here is a 261-residue protein sequence, read N- to C-terminus: 5'-nucleotidase SurE (261 aa).

Positions 8, 9, 43, and 96 each coordinate a divalent metal cation.

The protein belongs to the SurE nucleotidase family. It depends on a divalent metal cation as a cofactor.

The protein resides in the cytoplasm. The enzyme catalyses a ribonucleoside 5'-phosphate + H2O = a ribonucleoside + phosphate. In terms of biological role, nucleotidase that shows phosphatase activity on nucleoside 5'-monophosphates. This chain is 5'-nucleotidase SurE, found in Cereibacter sphaeroides (strain ATCC 17029 / ATH 2.4.9) (Rhodobacter sphaeroides).